The primary structure comprises 427 residues: 3-phosphoshikimate 1-carboxyvinyltransferase (427 aa).

Positions 20, 21, and 25 each coordinate 3-phosphoshikimate. A phosphoenolpyruvate-binding site is contributed by Lys-20. Phosphoenolpyruvate-binding residues include Gly-92 and Arg-120. Residues Ser-166, Gln-168, Asp-312, and Lys-339 each contribute to the 3-phosphoshikimate site. Gln-168 contributes to the phosphoenolpyruvate binding site. Asp-312 (proton acceptor) is an active-site residue. Residues Arg-343 and Arg-385 each contribute to the phosphoenolpyruvate site.

It belongs to the EPSP synthase family. In terms of assembly, monomer.

It is found in the cytoplasm. The catalysed reaction is 3-phosphoshikimate + phosphoenolpyruvate = 5-O-(1-carboxyvinyl)-3-phosphoshikimate + phosphate. The protein operates within metabolic intermediate biosynthesis; chorismate biosynthesis; chorismate from D-erythrose 4-phosphate and phosphoenolpyruvate: step 6/7. Functionally, catalyzes the transfer of the enolpyruvyl moiety of phosphoenolpyruvate (PEP) to the 5-hydroxyl of shikimate-3-phosphate (S3P) to produce enolpyruvyl shikimate-3-phosphate and inorganic phosphate. This Streptococcus mutans serotype c (strain ATCC 700610 / UA159) protein is 3-phosphoshikimate 1-carboxyvinyltransferase.